The primary structure comprises 314 residues: Porphobilinogen deaminase (314 aa).

Cys242 carries the post-translational modification S-(dipyrrolylmethanemethyl)cysteine.

Belongs to the HMBS family. Monomer. Dipyrromethane serves as cofactor.

The catalysed reaction is 4 porphobilinogen + H2O = hydroxymethylbilane + 4 NH4(+). Its pathway is porphyrin-containing compound metabolism; protoporphyrin-IX biosynthesis; coproporphyrinogen-III from 5-aminolevulinate: step 2/4. Its function is as follows. Tetrapolymerization of the monopyrrole PBG into the hydroxymethylbilane pre-uroporphyrinogen in several discrete steps. This is Porphobilinogen deaminase (hemC) from Bacillus subtilis (strain 168).